We begin with the raw amino-acid sequence, 201 residues long: Recombination protein RecR (201 aa).

The segment at 60-75 (CSCCGNVDTSDPCTIC) adopts a C4-type zinc-finger fold. The Toprim domain maps to 83-178 (TTLIVVEDVS…RVTRLAHGVP (96 aa)).

It belongs to the RecR family.

Functionally, may play a role in DNA repair. It seems to be involved in an RecBC-independent recombinational process of DNA repair. It may act with RecF and RecO. This Brucella anthropi (strain ATCC 49188 / DSM 6882 / CCUG 24695 / JCM 21032 / LMG 3331 / NBRC 15819 / NCTC 12168 / Alc 37) (Ochrobactrum anthropi) protein is Recombination protein RecR.